The chain runs to 102 residues: Large ribosomal subunit protein bL21 (102 aa).

Belongs to the bacterial ribosomal protein bL21 family. Part of the 50S ribosomal subunit. Contacts protein L20.

This protein binds to 23S rRNA in the presence of protein L20. The chain is Large ribosomal subunit protein bL21 from Geobacillus thermodenitrificans (strain NG80-2).